The chain runs to 325 residues: Acetyl-coenzyme A carboxylase carboxyl transferase subunit alpha (325 aa).

The CoA carboxyltransferase C-terminal domain maps to Arg-38–Thr-292.

The protein belongs to the AccA family. As to quaternary structure, acetyl-CoA carboxylase is a heterohexamer composed of biotin carboxyl carrier protein (AccB), biotin carboxylase (AccC) and two subunits each of ACCase subunit alpha (AccA) and ACCase subunit beta (AccD).

The protein resides in the cytoplasm. The enzyme catalyses N(6)-carboxybiotinyl-L-lysyl-[protein] + acetyl-CoA = N(6)-biotinyl-L-lysyl-[protein] + malonyl-CoA. It functions in the pathway lipid metabolism; malonyl-CoA biosynthesis; malonyl-CoA from acetyl-CoA: step 1/1. Its activity is regulated as follows. Inhibited by pyrrolidine dione antibiotics moiramide B (CPD1) and CPD2. Its function is as follows. Component of the acetyl coenzyme A carboxylase (ACC) complex. First, biotin carboxylase catalyzes the carboxylation of biotin on its carrier protein (BCCP) and then the CO(2) group is transferred by the carboxyltransferase to acetyl-CoA to form malonyl-CoA. This Bacillus subtilis (strain 168) protein is Acetyl-coenzyme A carboxylase carboxyl transferase subunit alpha.